Reading from the N-terminus, the 360-residue chain is Glutamate 5-kinase (360 aa).

ATP is bound at residue K7. Residues S47, D134, and N146 each contribute to the substrate site. Residues 166–167 (TD) and 210–216 (TGGISTK) contribute to the ATP site. A PUA domain is found at 275-356 (VGKITLDDGA…SSIIVVHRDV (82 aa)).

Belongs to the glutamate 5-kinase family.

Its subcellular location is the cytoplasm. It catalyses the reaction L-glutamate + ATP = L-glutamyl 5-phosphate + ADP. It functions in the pathway amino-acid biosynthesis; L-proline biosynthesis; L-glutamate 5-semialdehyde from L-glutamate: step 1/2. Catalyzes the transfer of a phosphate group to glutamate to form L-glutamate 5-phosphate. In Prochlorococcus marinus (strain MIT 9301), this protein is Glutamate 5-kinase.